The chain runs to 256 residues: Galactitol 2-dehydrogenase (256 aa).

NAD(+) contacts are provided by residues 15–17 (RGI), Asp36, 59–60 (DV), Asn86, Tyr152, and Lys156. Tyr152 functions as the Proton acceptor in the catalytic mechanism.

Belongs to the short-chain dehydrogenases/reductases (SDR) family.

It carries out the reaction galactitol + NAD(+) = keto-D-tagatose + NADH + H(+). The catalysed reaction is keto-D-fructose + NADH + H(+) = D-sorbitol + NAD(+). It participates in carbohydrate metabolism. Its function is as follows. Involved in galactitol catabolism. Catalyzes the oxidation of galactitol to D-tagatose. Can also catalyze the oxidation of D-sorbitol to D-fructose. In Agrobacterium fabrum (strain C58 / ATCC 33970) (Agrobacterium tumefaciens (strain C58)), this protein is Galactitol 2-dehydrogenase.